Consider the following 360-residue polypeptide: Hydroxyproline O-arabinosyltransferase RDN2 (360 aa).

A helical; Signal-anchor transmembrane segment spans residues 13 to 33; it reads VLGSSFATYNLVTMIIHYGSA.

It is found in the golgi apparatus membrane. The enzyme catalyses trans-4-hydroxy-L-prolyl-[protein] + UDP-beta-L-arabinofuranose = O-(beta-L-arabinofuranosyl)-trans-4-hydroxy-L-prolyl-[protein] + UDP + H(+). Glycosyltransferase involved in the O-arabinosylation of several proteins including extensins and small signaling peptides. Catalyzes the transfer of the initial L-arabinose to the hydroxyl group of Hyp residues. Probably involved in the arabinosylation of CLAVATA3/ESR-related (CLE) signaling peptides that move from root to shoot, to interact with SUNN receptor kinase signaling that regulates nodulation. Involved in long distance nodulation signaling events. Involved in the autoregulation of nodulation (AON), a long distance systemic signaling from root to shoot and back again, which allows legumes to limit the number of root nodules formed based on available nitrogen and previous rhizobial colonization. Functions in the root, upstream of the shoot receptor kinase SUNN and via CLE peptide, to control AON. This Medicago truncatula (Barrel medic) protein is Hydroxyproline O-arabinosyltransferase RDN2.